A 1541-amino-acid chain; its full sequence is ATP-binding cassette sub-family C member 2 (1541 aa).

Topologically, residues 1–26 (MDKFCNSTFWDLSLLESPEADLPLCF) are extracellular. The N-linked (GlcNAc...) asparagine glycan is linked to N6. Residues 27 to 47 (EQTVLVWIPLGFLWLLAPWQL) traverse the membrane as a helical segment. Residues 48 to 67 (YSVYRSRTKRSSITKFYLAK) are Cytoplasmic-facing. The chain crosses the membrane as a helical span at residues 68 to 88 (QVFVVFLLILAAIDLSLALTE). Topologically, residues 89 to 92 (DTGQ) are extracellular. The chain crosses the membrane as a helical span at residues 93–113 (ATVPPVRYTNPILYLCTWLLV). The Cytoplasmic portion of the chain corresponds to 114–125 (LAVQHSRQWCVR). A helical transmembrane segment spans residues 126–146 (KNSWFLSLFWILSVLCGVFQF). Residues 147–164 (QTLIRALLKDSKSNMAYS) lie on the Extracellular side of the membrane. Residues 165 to 185 (YLFFVSYGFQIVLLILTAFSG) traverse the membrane as a helical segment. At 186–309 (PSDSTQTPSV…DYPKSWLIKS (124 aa)) the chain is on the cytoplasmic side. A phosphoserine mark is found at S279 and S281. A helical transmembrane segment spans residues 310–330 (LFKTFHVVILKSFILKLIHDL). The ABC transmembrane type-1 1 domain maps to 318–601 (ILKSFILKLI…LPMVTSSILQ (284 aa)). The Extracellular portion of the chain corresponds to 331 to 356 (LVFLNPQLLKLLIGFVKSSNSYVWFG). Residues 357–377 (YICAILMFAVTLIQSFCLQSY) traverse the membrane as a helical segment. The Cytoplasmic portion of the chain corresponds to 378 to 433 (FQHCFVLGMCVRTTVMSSIYKKALTLSNLARKQYTIGETVNLMSVDSQKLMDATNY). Residues 434–454 (MQLVWSSVIQITLSIFFLWRE) traverse the membrane as a helical segment. Residues 455-457 (LGP) lie on the Extracellular side of the membrane. Residues 458–478 (SILAGVGVMVLLIPVNGVLAT) traverse the membrane as a helical segment. The Cytoplasmic segment spans residues 479 to 540 (KIRNIQVQNM…NLLRFGQLQS (62 aa)). A helical transmembrane segment spans residues 541-561 (LLIFILQITPILVSVVTFSVY). Residues 562-583 (VLVDSANVLNAEKAFTSITLFN) are Extracellular-facing. A helical membrane pass occupies residues 584 to 604 (ILRFPLSMLPMVTSSILQASV). Residues 605-967 (SVDRLERYLG…VKFSIYLKYL (363 aa)) lie on the Cytoplasmic side of the membrane. One can recognise an ABC transporter 1 domain in the interval 633–857 (VKFSEASFTW…KGVFARNWKT (225 aa)). Position 667–674 (667–674 (GTVGSGKS)) interacts with ATP. 2 disordered regions span residues 862 to 881 (SGPE…DDDD) and 901 to 923 (RENS…GKSL). Residue S874 is modified to Phosphoserine. A compositionally biased stretch (low complexity) spans 906–915 (RRTLSRSSRS). Phosphoserine is present on residues S922 and S926. Residues 968–988 (QAVGWWSILFIILFYGLNNVA) traverse the membrane as a helical segment. The region spanning 975 to 1260 (ILFIILFYGL…LVRMTSEAET (286 aa)) is the ABC transmembrane type-1 2 domain. Topologically, residues 989–1029 (FIGSNLWLSAWTSDSDNLNGTNNSSSHRDMRIGVFGALGLA) are extracellular. Residues N1007, N1010, and N1011 are each glycosylated (N-linked (GlcNAc...) asparagine). A helical transmembrane segment spans residues 1030 to 1050 (QGICLLISTLWSIYACRNASK). Residues 1051–1093 (ALHGQLLTNILRAPMRFFDTTPTGRIVNRFSGDISTVDDLLPQ) lie on the Cytoplasmic side of the membrane. A helical transmembrane segment spans residues 1094-1114 (TLRSWMMCFFGIAGTLVMICM). A1115 is a topological domain (extracellular). The helical transmembrane segment at 1116-1136 (TPVFAIIIIPLSILYISVQVF) threads the bilayer. The Cytoplasmic segment spans residues 1137 to 1207 (YVATSRQLRR…TSNRWLAIRL (71 aa)). The helical transmembrane segment at 1208–1228 (ELVGNLVVFCSALLLVIYRKT) threads the bilayer. Residues 1229–1230 (LT) lie on the Extracellular side of the membrane. A helical transmembrane segment spans residues 1231–1251 (GDVVGFVLSNALNITQTLNWL). Residues 1252-1541 (VRMTSEAETN…GIENVNHTEL (290 aa)) are Cytoplasmic-facing. The 235-residue stretch at 1296-1530 (IQFNNYQVRY…RGSFYLMAKE (235 aa)) folds into the ABC transporter 2 domain. 1330 to 1337 (GRTGAGKS) is an ATP binding site. At S1434 the chain carries Phosphoserine.

The protein belongs to the ABC transporter superfamily. ABCC family. Conjugate transporter (TC 3.A.1.208) subfamily. In terms of tissue distribution, mainly expressed in the liver.

It localises to the apical cell membrane. It catalyses the reaction an S-substituted glutathione(in) + ATP + H2O = an S-substituted glutathione(out) + ADP + phosphate + H(+). The catalysed reaction is taurolithocholate 3-sulfate(in) + ATP + H2O = taurolithocholate 3-sulfate(out) + ADP + phosphate + H(+). The enzyme catalyses ATP + H2O + xenobioticSide 1 = ADP + phosphate + xenobioticSide 2.. It carries out the reaction 17beta-estradiol 17-O-(beta-D-glucuronate)(in) + ATP + H2O = 17beta-estradiol 17-O-(beta-D-glucuronate)(out) + ADP + phosphate + H(+). It catalyses the reaction leukotriene C4(in) + ATP + H2O = leukotriene C4(out) + ADP + phosphate + H(+). The catalysed reaction is (4Z,15Z)-bilirubin IXalpha C8-beta-D-glucuronoside(in) + ATP + H2O = (4Z,15Z)-bilirubin IXalpha C8-beta-D-glucuronoside(out) + ADP + phosphate + H(+). The enzyme catalyses (4Z,15Z)-bilirubin IXalpha C8,C12-beta-D-bisglucuronoside(in) + ATP + H2O = (4Z,15Z)-bilirubin IXalpha C8,C12-beta-D-bisglucuronoside(out) + ADP + phosphate + H(+). Functionally, ATP-dependent transporter of the ATP-binding cassette (ABC) family that binds and hydrolyzes ATP to enable active transport of various substrates including many drugs, toxicants and endogenous compound across cell membranes. Transports a wide variety of conjugated organic anions such as sulfate-, glucuronide- and glutathione (GSH)-conjugates of endo- and xenobiotics substrates. Mediates hepatobiliary excretion of mono- and bis-glucuronidated bilirubin molecules and therefore play an important role in bilirubin detoxification. Also mediates hepatobiliary excretion of others glucuronide conjugates such as 17beta-estradiol 17-glucosiduronic acid and leukotriene C4. Transports sulfated bile salt such as taurolithocholate sulfate. Transports various anticancer drugs, such as anthracycline, vinca alkaloid and methotrexate and HIV-drugs such as protease inhibitors. The polypeptide is ATP-binding cassette sub-family C member 2 (Rattus norvegicus (Rat)).